The primary structure comprises 353 residues: UDP-3-O-acylglucosamine N-acyltransferase (353 aa).

Histidine 258 serves as the catalytic Proton acceptor.

Belongs to the transferase hexapeptide repeat family. LpxD subfamily. As to quaternary structure, homotrimer.

The catalysed reaction is a UDP-3-O-[(3R)-3-hydroxyacyl]-alpha-D-glucosamine + a (3R)-hydroxyacyl-[ACP] = a UDP-2-N,3-O-bis[(3R)-3-hydroxyacyl]-alpha-D-glucosamine + holo-[ACP] + H(+). It participates in bacterial outer membrane biogenesis; LPS lipid A biosynthesis. Catalyzes the N-acylation of UDP-3-O-acylglucosamine using 3-hydroxyacyl-ACP as the acyl donor. Is involved in the biosynthesis of lipid A, a phosphorylated glycolipid that anchors the lipopolysaccharide to the outer membrane of the cell. The protein is UDP-3-O-acylglucosamine N-acyltransferase of Parvibaculum lavamentivorans (strain DS-1 / DSM 13023 / NCIMB 13966).